The following is a 561-amino-acid chain: Centromere protein T (561 aa).

A disordered region spans residues 1-83 (MADHNPDSDS…HIQASGHLEE (83 aa)). Residues 18 to 27 (RVLDTADPRT) are compositionally biased toward basic and acidic residues. Residues 34–46 (ARAGARRALLETA) are compositionally biased toward low complexity. Residue Ser47 is modified to Phosphoserine. A Phosphothreonine modification is found at Thr85. The tract at residues 93-421 (ILLTAPESSI…RHHQFLEPAP (329 aa)) is flexible stalk domain. 2 disordered regions span residues 256–292 (HSLP…PGKP) and 333–457 (AEKK…DPHK). The segment covering 276–288 (KTQSSGPGLQKNS) has biased composition (polar residues). Phosphoserine occurs at positions 343, 345, and 356. The segment covering 357 to 367 (RVEEAEGHTEV) has biased composition (basic and acidic residues). Residues Ser373, Ser385, Ser386, and Ser397 each carry the phosphoserine modification. A compositionally biased stretch (low complexity) spans 395–407 (AASPESASSTPES).

Belongs to the CENP-T/CNN1 family. As to quaternary structure, component of the CENPA-CAD complex, composed of CENPI, CENPK, CENPL, CENPO, CENPP, CENPQ, CENPR and CENPS. The CENPA-CAD complex is probably recruited on centromeres by the CENPA-NAC complex, at least composed of CENPA, CENPC, CENPH, CENPM, CENPN, CENPT and CENPU. Identified in a centromeric complex containing histones H2A, H2B, H3 and H4, and at least CENPA, CENPB, CENPC, CENPT, CENPN, HJURP, SUPT16H, SSRP1 and RSF1. Interacts (via N-terminus) with the NDC80 complex. Heterodimer with CENPW; this dimer coassembles with CENPS-CENPX heterodimers at centromeres to form the tetrameric CENP-T-W-S-X complex. Post-translationally, dynamically phosphorylated at Ser-47 and probably also other sites during the cell cycle. Phosphorylated at Ser-47 during G2 phase, metaphase and anaphase, but not during telophase or G1 phase.

The protein localises to the nucleus. Its subcellular location is the chromosome. The protein resides in the centromere. It localises to the kinetochore. Its function is as follows. Component of the CENPA-NAC (nucleosome-associated) complex, a complex that plays a central role in assembly of kinetochore proteins, mitotic progression and chromosome segregation. The CENPA-NAC complex recruits the CENPA-CAD (nucleosome distal) complex and may be involved in incorporation of newly synthesized CENPA into centromeres. Part of a nucleosome-associated complex that binds specifically to histone H3-containing nucleosomes at the centromere, as opposed to nucleosomes containing CENPA. Component of the heterotetrameric CENP-T-W-S-X complex that binds and supercoils DNA, and plays an important role in kinetochore assembly. CENPT has a fundamental role in kinetochore assembly and function. It is one of the inner kinetochore proteins, with most further proteins binding downstream. Required for normal chromosome organization and normal progress through mitosis. The protein is Centromere protein T (CENPT) of Homo sapiens (Human).